The following is a 346-amino-acid chain: Tubulin-specific chaperone C (346 aa).

Methionine 1 bears the N-acetylmethionine mark. The tract at residues 1 to 26 (MESVSCSAAAVRTGDMESQRDLSLVP) is disordered. A phosphoserine mark is found at serine 80 and serine 168. Positions 140-171 (KTRGKDAASSTKVDAAPGIPPAVESIQDSPLP) are disordered. The C-CAP/cofactor C-like domain occupies 171 to 323 (PKKAEGDLGP…NWNDVDDFNW (153 aa)).

It belongs to the TBCC family. Supercomplex made of cofactors A to E. Cofactors A and D function by capturing and stabilizing tubulin in a quasi-native conformation. Cofactor E binds to the cofactor D-tubulin complex; interaction with cofactor C then causes the release of tubulin polypeptides that are committed to the native state. As to expression, expressed in the retina. Expressed in the rod and cone photoreceptors, extending from the inner segments (IS), through the outer nuclear layer (ONL) and into the synapses in the outer plexiform layer (OPL). Strongly expressed to the photoreceptor connecting cilium at the tips of the IS (at protein level).

It localises to the cytoplasm. Functionally, tubulin-folding protein; involved in the final step of the tubulin folding pathway. The protein is Tubulin-specific chaperone C (TBCC) of Homo sapiens (Human).